The primary structure comprises 957 residues: Glycine dehydrogenase (decarboxylating) (957 aa).

Lys708 bears the N6-(pyridoxal phosphate)lysine mark.

It belongs to the GcvP family. In terms of assembly, the glycine cleavage system is composed of four proteins: P, T, L and H. The cofactor is pyridoxal 5'-phosphate.

The enzyme catalyses N(6)-[(R)-lipoyl]-L-lysyl-[glycine-cleavage complex H protein] + glycine + H(+) = N(6)-[(R)-S(8)-aminomethyldihydrolipoyl]-L-lysyl-[glycine-cleavage complex H protein] + CO2. In terms of biological role, the glycine cleavage system catalyzes the degradation of glycine. The P protein binds the alpha-amino group of glycine through its pyridoxal phosphate cofactor; CO(2) is released and the remaining methylamine moiety is then transferred to the lipoamide cofactor of the H protein. This Cronobacter sakazakii (strain ATCC BAA-894) (Enterobacter sakazakii) protein is Glycine dehydrogenase (decarboxylating).